The sequence spans 420 residues: Glucose-1-phosphate adenylyltransferase (420 aa).

Residues Y107, G172, 187–188 (EK), and S205 contribute to the alpha-D-glucose 1-phosphate site.

This sequence belongs to the bacterial/plant glucose-1-phosphate adenylyltransferase family. As to quaternary structure, homotetramer.

The catalysed reaction is alpha-D-glucose 1-phosphate + ATP + H(+) = ADP-alpha-D-glucose + diphosphate. The protein operates within glycan biosynthesis; glycogen biosynthesis. In terms of biological role, involved in the biosynthesis of ADP-glucose, a building block required for the elongation reactions to produce glycogen. Catalyzes the reaction between ATP and alpha-D-glucose 1-phosphate (G1P) to produce pyrophosphate and ADP-Glc. This chain is Glucose-1-phosphate adenylyltransferase, found in Rhodopseudomonas palustris (strain BisB18).